A 206-amino-acid chain; its full sequence is MKPQFITLDGIDGAGKSTNLAVIKAWFERRGLPVLFTREPGGTPVGEALREILLNPETKAGLRAETLMMFAARMQHIEEVILPALSDGIHVVSDRFTDATFAYQGGGRGMPSEDIEILEHWVQGGLKPDLTLLLDVPLEVSMARIGQTREKDRFEQEQADFFMRVRGVYLDRAAACPERYAVIDSNRNLDEVRNSIEKVLDGHFGC.

10-17 (GIDGAGKS) lines the ATP pocket.

This sequence belongs to the thymidylate kinase family.

It carries out the reaction dTMP + ATP = dTDP + ADP. Functionally, phosphorylation of dTMP to form dTDP in both de novo and salvage pathways of dTTP synthesis. In Neisseria meningitidis serogroup B (strain ATCC BAA-335 / MC58), this protein is Thymidylate kinase (tmk).